The sequence spans 185 residues: Ribosome-recycling factor (185 aa).

The protein belongs to the RRF family.

The protein localises to the cytoplasm. Its function is as follows. Responsible for the release of ribosomes from messenger RNA at the termination of protein biosynthesis. May increase the efficiency of translation by recycling ribosomes from one round of translation to another. The protein is Ribosome-recycling factor of Haemophilus influenzae (strain ATCC 51907 / DSM 11121 / KW20 / Rd).